The following is a 594-amino-acid chain: Kelch domain-containing protein 7B (594 aa).

Residues 1 to 174 (MVLRSHPFPR…PAGRSGALTE (174 aa)) are disordered. Over residues 49-58 (IGTGTGGLVE) the composition is skewed to gly residues. The segment covering 64 to 74 (QPRSSETNGSP) has biased composition (polar residues). Residues 104–115 (PAQPPAQRPPGP) show a composition bias toward pro residues. Residues 116 to 126 (AASSSARRSQP) show a composition bias toward low complexity. Kelch repeat units follow at residues 306 to 354 (EEPP…TMHN), 355 to 405 (YLFL…ALDG), 406 to 448 (LLYA…AVAC), 451 to 493 (DIYV…ALGG), and 495 to 538 (LYRF…TTLG).

This is Kelch domain-containing protein 7B (KLHDC7B) from Homo sapiens (Human).